Reading from the N-terminus, the 104-residue chain is Large ribosomal subunit protein uL24 (104 aa).

This sequence belongs to the universal ribosomal protein uL24 family. Part of the 50S ribosomal subunit.

Its function is as follows. One of two assembly initiator proteins, it binds directly to the 5'-end of the 23S rRNA, where it nucleates assembly of the 50S subunit. In terms of biological role, one of the proteins that surrounds the polypeptide exit tunnel on the outside of the subunit. The polypeptide is Large ribosomal subunit protein uL24 (Nitrobacter winogradskyi (strain ATCC 25391 / DSM 10237 / CIP 104748 / NCIMB 11846 / Nb-255)).